The primary structure comprises 563 residues: Arginine--tRNA ligase (563 aa).

The short motif at 121 to 131 is the 'HIGH' region element; sequence PNIAKPFSIGH.

It belongs to the class-I aminoacyl-tRNA synthetase family. Monomer.

The protein localises to the cytoplasm. It catalyses the reaction tRNA(Arg) + L-arginine + ATP = L-arginyl-tRNA(Arg) + AMP + diphosphate. This chain is Arginine--tRNA ligase, found in Streptococcus pyogenes serotype M6 (strain ATCC BAA-946 / MGAS10394).